We begin with the raw amino-acid sequence, 86 residues long: Small ribosomal subunit protein uS17 (86 aa).

Belongs to the universal ribosomal protein uS17 family. In terms of assembly, part of the 30S ribosomal subunit.

In terms of biological role, one of the primary rRNA binding proteins, it binds specifically to the 5'-end of 16S ribosomal RNA. The protein is Small ribosomal subunit protein uS17 of Methylococcus capsulatus (strain ATCC 33009 / NCIMB 11132 / Bath).